Here is an 855-residue protein sequence, read N- to C-terminus: MNESFDKDFSNHTPMMQQYLKLKAQHPEILLFYRMGDFYELFYDDAKRASQLLDISLTKRGASAGEPIPMAGIPHHAVENYLAKLVNQGESVAICEQIGDPATSKGPVERKVVRIVTPGTISDEALLQERQDNLLAAIWQDGKGYGYATLDISSGRFRLSEPADRETMAAELQRTNPAELLYAEDFAEMALIEGRRGLRRRPLWEFEIDTARQQLNLQFGTRDLVGFGVENASRGLCAAGCLLQYVKDTQRTSLPHIRSITMERQQDSIIMDAATRRNLEITQNLAGGVENTLAAVLDCTVTPMGSRMLKRWLHMPVRNTNILRERQQTIGALQDTVSELQPVLRQVGDLERILARLALRTARPRDLARMRHAFQQLPELHAQLETVDSAPVQALRKKMGDFAELRDLLERAIIDAPPVLVRDGGVIAPGYHEELDEWRALADGATDYLDRLEIRERERTGLDTLKVGYNAVHGYYIQISRGQSHLAPINYVRRQTLKNAERYIIPELKEYEDKVLTSKGKALALEKQLYDELFDLLLPHLADLQQSANALAELDVLVNLAERAWTLNYTCPTFTDKPGIRITEGRHPVVEQVLNEPFIANPLNLSPQRRMLIITGPNMGGKSTYMRQTALIALLAYIGSYVPAQNVEIGPIDRIFTRVGAADDLASGRSTFMVEMTETANILHNATENSLVLMDEIGRGTSTYDGLSLAWACAENLANKIKALTLFATHYFELTQLPEKMEGVANVHLDALEHGDTIAFMHSVQDGAASKSYGLAVAALAGVPKEVIKRARQKLRELESISPNAAATQVDGTQMSLLAAPEETSPAVEALENLDPDSLTPRQALEWIYRLKSLV.

616–623 provides a ligand contact to ATP; that stretch reads GPNMGGKS.

Belongs to the DNA mismatch repair MutS family.

This protein is involved in the repair of mismatches in DNA. It is possible that it carries out the mismatch recognition step. This protein has a weak ATPase activity. The polypeptide is DNA mismatch repair protein MutS (Salmonella newport (strain SL254)).